The primary structure comprises 506 residues: EPTC-inducible aldehyde dehydrogenase (506 aa).

219-225 lines the NAD(+) pocket; that stretch reads GFGVEAG. Active-site residues include E263 and C302.

It belongs to the aldehyde dehydrogenase family.

The enzyme catalyses an aldehyde + NAD(+) + H2O = a carboxylate + NADH + 2 H(+). Functionally, degrades all aldehydes potentially generated by N dealkylation of thiocarbamates and may also participate in ethanolamine metabolism and further assimilation of degradation products by thiocarbamate-induced cytochrome P-450. The protein is EPTC-inducible aldehyde dehydrogenase (thcA) of Rhodococcus erythropolis (Arthrobacter picolinophilus).